The chain runs to 251 residues: NLP effector protein Pc129485 (251 aa).

Residues 1-19 (MNFRIVLLVLVASLAGAQA) form the signal peptide. Residues 127–133 (GHRHNWE) carry the Hepta-peptide GHRHDWE motif motif. Residues asparagine 146 and asparagine 218 are each glycosylated (N-linked (GlcNAc...) asparagine).

The protein belongs to the Necrosis inducing protein (NPP1) family.

It is found in the secreted. Its function is as follows. Secreted effector that contributes strongly to virulence during infection by P.capsici. The polypeptide is NLP effector protein Pc129485 (Phytophthora capsici).